The following is a 439-amino-acid chain: DNA primase DnaG (439 aa).

A Toprim domain is found at 169–243; the sequence is DSIIVVEGRA…DIDYVARAPY (75 aa). Mg(2+) contacts are provided by Glu175, Asp217, and Asp219.

This sequence belongs to the archaeal DnaG primase family. In terms of assembly, forms a ternary complex with MCM helicase and DNA. It depends on Mg(2+) as a cofactor.

It catalyses the reaction ssDNA + n NTP = ssDNA/pppN(pN)n-1 hybrid + (n-1) diphosphate.. RNA polymerase that catalyzes the synthesis of short RNA molecules used as primers for DNA polymerase during DNA replication. This is DNA primase DnaG from Methanococcus maripaludis (strain C7 / ATCC BAA-1331).